A 518-amino-acid chain; its full sequence is METDGGDFPSVWERALAQLDDGVTQHQRAFVRLTRPLGLLDGTALLAVPNDLTKDVIEQKVREPLTRALSEAYGSPIRLAVTVDPSIGQVLTPERTGEHSGGVGSVPSVERERGSVLTGLDGDDGLHLDERRSGSLEEDSPLDDSDPDLLFTGYKVDRGPGTGRQPRRPTTRIENSRLNPKYIFETFVIGASNRFAHAAAVAVAEAPAKAYNPLFIYGESGLGKTHLLHAIGHYAQNLYPGVQVRYVNSEEFTNDFINSIRDDKAQAFQRRHRDVDVLLIDDIQFLSNKVQTQEEFFHTFNTLHNASKQVVITSDLPPKQLSGFEERMRSRFEWGLITDVQPPDLETRIAILRKKAIGERLEVPDDVNEYIASKISSNIRELEGALIRVTAFASLNRQPVDMQLAEIVLRDLIPNEETPEITAAAIMGQTASYFSVTLEDLCGTSRSRTLVTARQIAMYLCRELTELSLPKIGQHFGGRDHTTVMHAERKIKQQMAERRSTYNQVTELTNRIKKQSGA.

The segment at 1–76 (METDGGDFPS…RALSEAYGSP (76 aa)) is domain I, interacts with DnaA modulators. Residues 76–176 (PIRLAVTVDP…RRPTTRIENS (101 aa)) are domain II. A disordered region spans residues 91–174 (LTPERTGEHS…QPRRPTTRIE (84 aa)). The span at 124-135 (DGLHLDERRSGS) shows a compositional bias: basic and acidic residues. Acidic residues predominate over residues 136–147 (LEEDSPLDDSDP). The tract at residues 177 to 393 (RLNPKYIFET…GALIRVTAFA (217 aa)) is domain III, AAA+ region. ATP-binding residues include Gly-221, Gly-223, Lys-224, and Thr-225. The tract at residues 394–518 (SLNRQPVDMQ…TNRIKKQSGA (125 aa)) is domain IV, binds dsDNA.

The protein belongs to the DnaA family. Oligomerizes as a right-handed, spiral filament on DNA at oriC.

It localises to the cytoplasm. Plays an essential role in the initiation and regulation of chromosomal replication. ATP-DnaA binds to the origin of replication (oriC) to initiate formation of the DNA replication initiation complex once per cell cycle. Binds the DnaA box (a 9 base pair repeat at the origin) and separates the double-stranded (ds)DNA. Forms a right-handed helical filament on oriC DNA; dsDNA binds to the exterior of the filament while single-stranded (ss)DNA is stabiized in the filament's interior. The ATP-DnaA-oriC complex binds and stabilizes one strand of the AT-rich DNA unwinding element (DUE), permitting loading of DNA polymerase. After initiation quickly degrades to an ADP-DnaA complex that is not apt for DNA replication. Binds acidic phospholipids. The polypeptide is Chromosomal replication initiator protein DnaA (Kineococcus radiotolerans (strain ATCC BAA-149 / DSM 14245 / SRS30216)).